A 145-amino-acid chain; its full sequence is uncharacterized protein (145 aa).

The protein to R.meliloti R00649.

This is an uncharacterized protein from Agrobacterium fabrum (strain C58 / ATCC 33970) (Agrobacterium tumefaciens (strain C58)).